Consider the following 400-residue polypeptide: CCA-adding enzyme (400 aa).

The ATP site is built by Gly28 and Arg31. 2 residues coordinate CTP: Gly28 and Arg31. 2 residues coordinate Mg(2+): Asp41 and Asp43. ATP-binding residues include Arg112, Asp155, Arg158, Arg161, and Arg164. The CTP site is built by Arg112, Asp155, Arg158, Arg161, and Arg164.

Belongs to the tRNA nucleotidyltransferase/poly(A) polymerase family. Bacterial CCA-adding enzyme type 3 subfamily. As to quaternary structure, homodimer. The cofactor is Mg(2+).

It carries out the reaction a tRNA precursor + 2 CTP + ATP = a tRNA with a 3' CCA end + 3 diphosphate. The enzyme catalyses a tRNA with a 3' CCA end + 2 CTP + ATP = a tRNA with a 3' CCACCA end + 3 diphosphate. In terms of biological role, catalyzes the addition and repair of the essential 3'-terminal CCA sequence in tRNAs without using a nucleic acid template. Adds these three nucleotides in the order of C, C, and A to the tRNA nucleotide-73, using CTP and ATP as substrates and producing inorganic pyrophosphate. tRNA 3'-terminal CCA addition is required both for tRNA processing and repair. Also involved in tRNA surveillance by mediating tandem CCA addition to generate a CCACCA at the 3' terminus of unstable tRNAs. While stable tRNAs receive only 3'-terminal CCA, unstable tRNAs are marked with CCACCA and rapidly degraded. This Staphylococcus aureus (strain bovine RF122 / ET3-1) protein is CCA-adding enzyme.